The primary structure comprises 661 residues: Ubiquitin carboxyl-terminal hydrolase 25 (661 aa).

Positions 24 to 335 (LGLRNLGNTC…KAYILFFSRS (312 aa)) constitute a USP domain. Cys33 (nucleophile) is an active-site residue. Catalysis depends on His294, which acts as the Proton acceptor. Disordered stretches follow at residues 387 to 406 (GNLASSKPHKFIRPKPRAEQ) and 449 to 558 (FHQD…LCSS). Over residues 449 to 461 (FHQDENIAPKANK) the composition is skewed to basic and acidic residues. Polar residues-rich tracts occupy residues 462-475 (ENSVSVLPTKVNSG) and 545-558 (NGVSTTQSKGLCSS).

Belongs to the peptidase C19 family.

It catalyses the reaction Thiol-dependent hydrolysis of ester, thioester, amide, peptide and isopeptide bonds formed by the C-terminal Gly of ubiquitin (a 76-residue protein attached to proteins as an intracellular targeting signal).. Recognizes and hydrolyzes the peptide bond at the C-terminal Gly of ubiquitin. Involved in the processing of poly-ubiquitin precursors as well as that of ubiquitinated proteins. In Arabidopsis thaliana (Mouse-ear cress), this protein is Ubiquitin carboxyl-terminal hydrolase 25 (UBP25).